We begin with the raw amino-acid sequence, 613 residues long: Serine/threonine-protein kinase pkpA (613 aa).

One can recognise a Protein kinase domain in the interval 17–269 (SKLNTVLGKG…AQEILEHRFL (253 aa)). Residues 23 to 31 (LGKGAYKVV) and Lys-50 contribute to the ATP site. Asp-140 serves as the catalytic Proton acceptor. Disordered regions lie at residues 424–475 (LQPQ…STML) and 589–613 (VTQR…QELM). A compositionally biased stretch (pro residues) spans 427 to 441 (QPQPQPQPQPQPQPQ). The segment covering 442 to 475 (PQFQLQPQLQYLSPQSTTSPGPTSDDNSTNSTML) has biased composition (low complexity). Residues 592–602 (RGLQGTRSGAS) are compositionally biased toward polar residues.

This sequence belongs to the protein kinase superfamily. Ser/Thr protein kinase family.

It carries out the reaction L-seryl-[protein] + ATP = O-phospho-L-seryl-[protein] + ADP + H(+). It catalyses the reaction L-threonyl-[protein] + ATP = O-phospho-L-threonyl-[protein] + ADP + H(+). Functionally, serine/threonine protein kinase that probably participates as an intermediate in an intracellular system controlling nuclear proliferation. This chain is Serine/threonine-protein kinase pkpA (pkpA), found in Phycomyces blakesleeanus (strain ATCC 8743b / DSM 1359 / FGSC 10004 / NBRC 33097 / NRRL 1555).